We begin with the raw amino-acid sequence, 88 residues long: Small ribosomal subunit protein bS16 (88 aa).

It belongs to the bacterial ribosomal protein bS16 family.

This is Small ribosomal subunit protein bS16 from Geobacter sp. (strain M21).